The primary structure comprises 256 residues: Phosphatidylglycerol--prolipoprotein diacylglyceryl transferase (256 aa).

3 consecutive transmembrane segments (helical) span residues valine 19–tryptophan 39, leucine 56–tyrosine 76, and isoleucine 91–leucine 111. Position 139 (arginine 139) interacts with a 1,2-diacyl-sn-glycero-3-phospho-(1'-sn-glycerol). A helical membrane pass occupies residues phenylalanine 231–leucine 251.

The protein belongs to the Lgt family.

The protein resides in the cell inner membrane. It carries out the reaction L-cysteinyl-[prolipoprotein] + a 1,2-diacyl-sn-glycero-3-phospho-(1'-sn-glycerol) = an S-1,2-diacyl-sn-glyceryl-L-cysteinyl-[prolipoprotein] + sn-glycerol 1-phosphate + H(+). The protein operates within protein modification; lipoprotein biosynthesis (diacylglyceryl transfer). Functionally, catalyzes the transfer of the diacylglyceryl group from phosphatidylglycerol to the sulfhydryl group of the N-terminal cysteine of a prolipoprotein, the first step in the formation of mature lipoproteins. The protein is Phosphatidylglycerol--prolipoprotein diacylglyceryl transferase of Legionella pneumophila (strain Lens).